The primary structure comprises 504 residues: Bifunctional purine biosynthesis protein PurH (504 aa).

Residues 1–144 (MRKRALISVY…KSFKNVVVIS (144 aa)) enclose the MGS-like domain.

Belongs to the PurH family.

It catalyses the reaction (6R)-10-formyltetrahydrofolate + 5-amino-1-(5-phospho-beta-D-ribosyl)imidazole-4-carboxamide = 5-formamido-1-(5-phospho-D-ribosyl)imidazole-4-carboxamide + (6S)-5,6,7,8-tetrahydrofolate. The enzyme catalyses IMP + H2O = 5-formamido-1-(5-phospho-D-ribosyl)imidazole-4-carboxamide. It participates in purine metabolism; IMP biosynthesis via de novo pathway; 5-formamido-1-(5-phospho-D-ribosyl)imidazole-4-carboxamide from 5-amino-1-(5-phospho-D-ribosyl)imidazole-4-carboxamide (10-formyl THF route): step 1/1. The protein operates within purine metabolism; IMP biosynthesis via de novo pathway; IMP from 5-formamido-1-(5-phospho-D-ribosyl)imidazole-4-carboxamide: step 1/1. The sequence is that of Bifunctional purine biosynthesis protein PurH from Fusobacterium nucleatum subsp. nucleatum (strain ATCC 25586 / DSM 15643 / BCRC 10681 / CIP 101130 / JCM 8532 / KCTC 2640 / LMG 13131 / VPI 4355).